The sequence spans 61 residues: Large ribosomal subunit protein uL30 (61 aa).

The protein belongs to the universal ribosomal protein uL30 family. As to quaternary structure, part of the 50S ribosomal subunit.

The chain is Large ribosomal subunit protein uL30 from Bordetella parapertussis (strain 12822 / ATCC BAA-587 / NCTC 13253).